The following is a 2429-amino-acid chain: Highly reducing polyketide synthase acrA (2429 aa).

The 433-residue stretch at Pro4–Ser436 folds into the Ketosynthase family 3 (KS3) domain. Active-site for beta-ketoacyl synthase activity residues include Cys177, His314, and His356. Residues Val541 to Gln861 are malonyl-CoA:ACP transacylase (MAT) domain. The N-terminal hotdog fold stretch occupies residues His931–Ala1068. Residues His931 to Pro1229 form a dehydratase (DH) domain region. Residues His931–Arg1230 enclose the PKS/mFAS DH domain. The active-site Proton acceptor; for dehydratase activity is His963. The segment at Val1082 to Arg1230 is C-terminal hotdog fold. Residue Asp1141 is the Proton donor; for dehydratase activity of the active site. The methyltransferase (MT) domain stretch occupies residues Asn1388–Tyr1577. Residues Thr2065 to His2235 are ketoreductase (KR) domain. One can recognise a Carrier domain in the interval Glu2351 to Val2428. Ser2388 bears the O-(pantetheine 4'-phosphoryl)serine mark.

The protein operates within secondary metabolite biosynthesis. In terms of biological role, highly reducing polyketide synthase; part of the cluster that mediates the biosynthesis of acurin A, a highly reduced polyketide coupled to a serine via a peptide bond. The activities of the highly reducing polyketide synthase acrA and the nonribosomal peptide synthetase acrB are collectively responsible for the synthesis of the acurin A core structure with a heptaketide backbone produced by acrA covalently fused to a L-serine by acrB. After the formation of the PK-NRP hybrid product, it is detached from acrB by reductive release to set up the formation of the lactam ring by aldol condensation. The hydrolyase acrC then catalyzes water loss to generate a double bond in the ring. This double bond is probably reduced, which is followed by three oxidations at C-22 to generate the carboxylic acid moiety, involving probably the FAD-binding monooxygenase acrE and the cytochrome P450 monooxygenases acrD and acrF. Finally, a last methylation step performed by the O-methyltransferase acrG leads to the production of acurin A. The sequence is that of Highly reducing polyketide synthase acrA from Aspergillus aculeatus (strain ATCC 16872 / CBS 172.66 / WB 5094).